Consider the following 236-residue polypeptide: Probable transcriptional regulatory protein Suden_1389 (236 aa).

It belongs to the TACO1 family.

It is found in the cytoplasm. The chain is Probable transcriptional regulatory protein Suden_1389 from Sulfurimonas denitrificans (strain ATCC 33889 / DSM 1251) (Thiomicrospira denitrificans (strain ATCC 33889 / DSM 1251)).